The chain runs to 152 residues: Large ribosomal subunit protein bL9 (152 aa).

Belongs to the bacterial ribosomal protein bL9 family.

In terms of biological role, binds to the 23S rRNA. In Prochlorococcus marinus (strain MIT 9313), this protein is Large ribosomal subunit protein bL9.